Reading from the N-terminus, the 466-residue chain is MTHDGTWSDESDWEAVEFELDEAAQAPPAPVVAVVGRPNVGKSTLVNRILGRREAVVQDVPGVTRDRVSYDALWTGRRFVVQDTGGWEPDAKGLQQLVAEQASVAMRTADAVILVVDALVGATTADEAAARILLRSGKPVFLAANKVDSDKAEADAAMLWSLGLGEPHPISAMHGRGVADLLDEVLAALPEVSEVAPRPGGPRRVALVGKPNVGKSSLLNKLAGDQRSVVHDVAGTTVDPVDSLIELGDRVWRFVDTAGLRRKVGQASGHEFYASVRTHSAIDAAEVVIVLIDASAPLTEQDQRVLSMVIEAGRALVLAFNKWDLVDEDRRELLEREIDRELVQLRWAPRVNISAKTGRAVAKLVPAMETALASWDTRIATGPLNSWLKEVVAATPPPVRGGKQPRILFATQAAARPPTFVLFTTGFLEAGYRRFLERRLREAFGFEGTPIRINVRVREKRGARRR.

EngA-type G domains are found at residues 30 to 193 (PVVA…PEVS) and 203 to 376 (RRVA…ASWD). GTP-binding positions include 36 to 43 (GRPNVGKS), 83 to 87 (DTGGW), 145 to 148 (NKVD), 209 to 216 (GKPNVGKS), 256 to 260 (DTAGL), and 321 to 324 (NKWD). The 83-residue stretch at 377–459 (TRIATGPLNS…PIRINVRVRE (83 aa)) folds into the KH-like domain.

Belongs to the TRAFAC class TrmE-Era-EngA-EngB-Septin-like GTPase superfamily. EngA (Der) GTPase family. In terms of assembly, associates with the 50S ribosomal subunit.

GTPase that plays an essential role in the late steps of ribosome biogenesis. In Mycobacterium avium (strain 104), this protein is GTPase Der.